The sequence spans 378 residues: REST corepressor 3 (378 aa).

The 83-residue stretch at 1-83 folds into the ELM2 domain; it reads MRVGAEYQAR…KSLADLPNFT (83 aa). Residues 84–135 form the SANT domain; the sequence is PFPDEWTVEDKVLFEQAFSFHGKSFHRIQQMLPDKTIASLVKYYYSWKKTRS. Residues 147-219 are disordered; it reads LANRNNQGDS…SQRSKCRPPK (73 aa). The span at 162-184 shows a compositional bias: basic and acidic residues; it reads EPHPMDGNDSDYDPKKEAKKEGN. The segment covering 205 to 217 has biased composition (basic residues); it reads QHRHHSQRSKCRP. Positions 238–273 form a coiled coil; it reads ANTILRRLDMELISLKRQVQNAKQVNSALKQKMEGG. The tract at residues 337–356 is disordered; sequence TASSTSCCSCSPPSASAAPT.

The protein belongs to the CoREST family.

The protein resides in the nucleus. May act as a component of a corepressor complex that represses transcription. The protein is REST corepressor 3 (RCOR3) of Gallus gallus (Chicken).